Consider the following 224-residue polypeptide: Ribonuclease 3 (224 aa).

Positions 5–127 (ANRLQRRLGY…IIGAIYLDSD (123 aa)) constitute an RNase III domain. Glutamate 40 contacts Mg(2+). The active site involves aspartate 44. Mg(2+)-binding residues include aspartate 113 and glutamate 116. Glutamate 116 is an active-site residue. Residues 154 to 224 (DPKTRLQECL…AELALKQLES (71 aa)) form the DRBM domain.

Belongs to the ribonuclease III family. As to quaternary structure, homodimer. Mg(2+) serves as cofactor.

It localises to the cytoplasm. It catalyses the reaction Endonucleolytic cleavage to 5'-phosphomonoester.. Functionally, digests double-stranded RNA. Involved in the processing of primary rRNA transcript to yield the immediate precursors to the large and small rRNAs (23S and 16S). Processes some mRNAs, and tRNAs when they are encoded in the rRNA operon. Processes pre-crRNA and tracrRNA of type II CRISPR loci if present in the organism. In Photobacterium profundum (strain SS9), this protein is Ribonuclease 3.